We begin with the raw amino-acid sequence, 396 residues long: NASP-related protein sim3 (396 aa).

The tract at residues 1 to 31 (MSSDTKTLENSKGNSATDADTKNPSSSDSRA) is disordered. TPR repeat units follow at residues 32–65 (IEQL…SESI) and 89–122 (IENS…GSFT). The tract at residues 135 to 164 (NEENSSIAHPEKESEEKETNEASPASEEDE) is disordered. Basic and acidic residues predominate over residues 143 to 154 (HPEKESEEKETN). A TPR 3 repeat occupies 199-232 (ADIYDLLGELSLEIENFSQASQDLKTALEWKEKV). Positions 267–329 (CEHVEKAAEI…QKTLDLKHGA (63 aa)) form a coiled coil. The segment covering 284 to 301 (RENEVTDKKGKGKQKAEE) has biased composition (basic and acidic residues). Disordered stretches follow at residues 284–307 (RENE…LTSD) and 334–396 (EAVM…KKKD). Residues 343–353 (SSLLSKDSSSL) are compositionally biased toward low complexity.

Belongs to the NASP family. In terms of assembly, interacts with cnp1, hht1, hht2 and hht3; has a preference for CENP-A (cnp1) over histone H3 (hht1/2/3).

Its subcellular location is the nucleus. Functionally, histone H3 and H3-like CENP-A-specific chaperone. Promotes delivery and incorporation of CENP-A in centromeric chromatin, probably by escorting nascent CENP-A to CENP-A chromatin assembly factors. Required for central core silencing and normal chromosome segregation. This chain is NASP-related protein sim3 (sim3), found in Schizosaccharomyces pombe (strain 972 / ATCC 24843) (Fission yeast).